The chain runs to 114 residues: EVQLQQSGAELVKAGSSVKMSCKATGYTFSSYELYWVRQAPGQGLEDLGYISSSSAYPNYAQKFQGRVTITADESTNTAYMELSSLRSEDTAVYFCAVRVISRYFDGWGQGTLV.

The Ig-like domain occupies 1-106 (EVQLQQSGAE…AVRVISRYFD (106 aa)).

In Mus musculus (Mouse), this protein is Ig heavy chain V region.